The chain runs to 542 residues: CTP synthase (542 aa).

An amidoligase domain region spans residues methionine 1–leucine 265. Position 13 (serine 13) interacts with CTP. Residue serine 13 participates in UTP binding. Residues serine 14–leucine 19 and aspartate 71 each bind ATP. Positions 71 and 139 each coordinate Mg(2+). CTP contacts are provided by residues aspartate 146–glutamate 148, lysine 186–glutamine 191, and lysine 222. Residues lysine 186–glutamine 191 and lysine 222 contribute to the UTP site. In terms of domain architecture, Glutamine amidotransferase type-1 spans threonine 291 to leucine 541. Glycine 353 serves as a coordination point for L-glutamine. Cysteine 380 serves as the catalytic Nucleophile; for glutamine hydrolysis. L-glutamine-binding positions include phenylalanine 381–glutamine 384, glutamate 404, and arginine 469. Active-site residues include histidine 514 and glutamate 516.

It belongs to the CTP synthase family. As to quaternary structure, homotetramer.

The enzyme catalyses UTP + L-glutamine + ATP + H2O = CTP + L-glutamate + ADP + phosphate + 2 H(+). It catalyses the reaction L-glutamine + H2O = L-glutamate + NH4(+). The catalysed reaction is UTP + NH4(+) + ATP = CTP + ADP + phosphate + 2 H(+). It participates in pyrimidine metabolism; CTP biosynthesis via de novo pathway; CTP from UDP: step 2/2. Its activity is regulated as follows. Allosterically activated by GTP, when glutamine is the substrate; GTP has no effect on the reaction when ammonia is the substrate. The allosteric effector GTP functions by stabilizing the protein conformation that binds the tetrahedral intermediate(s) formed during glutamine hydrolysis. Inhibited by the product CTP, via allosteric rather than competitive inhibition. In terms of biological role, catalyzes the ATP-dependent amination of UTP to CTP with either L-glutamine or ammonia as the source of nitrogen. Regulates intracellular CTP levels through interactions with the four ribonucleotide triphosphates. This chain is CTP synthase, found in Rhodospirillum rubrum (strain ATCC 11170 / ATH 1.1.1 / DSM 467 / LMG 4362 / NCIMB 8255 / S1).